Here is a 355-residue protein sequence, read N- to C-terminus: MTGSAEYSARRVLPDAPLLAAATGRTPSRRPVWFMRQAGRSLPEYREIRAGIGMLESCFDPALVCEITMQPVRRHDVDAAILFSDIVVPLKAAGIDLDIVAGVGPVVANPIRSIADVAALPRLVPEEVGAIAQAVRLLTTELGSTPLIGFAGAPFTLASYLVEGGPSRNHEKTKALMHSDPKTWHALLGSLADTTICFLQTQLKAGVDAVQLFDSWAGALSLADYREFVLPHSERVFAEVAAAGVPRIHFGVGTGELLGAMGEAGADVVGVDWRIPLDVAAGRVGPGKALQGNLDPAVLFAGPEVIDREVRRIAAEGDRAIEAGAIGHIFNLGHGVLPDTDPTAITSAVELVHSL.

Residues 36–40 (RQAGR), Asp-85, Tyr-160, Ser-215, and His-334 contribute to the substrate site.

This sequence belongs to the uroporphyrinogen decarboxylase family. As to quaternary structure, homodimer.

The protein resides in the cytoplasm. The enzyme catalyses uroporphyrinogen III + 4 H(+) = coproporphyrinogen III + 4 CO2. The protein operates within porphyrin-containing compound metabolism; protoporphyrin-IX biosynthesis; coproporphyrinogen-III from 5-aminolevulinate: step 4/4. In terms of biological role, catalyzes the decarboxylation of four acetate groups of uroporphyrinogen-III to yield coproporphyrinogen-III. In Rhodococcus erythropolis (strain PR4 / NBRC 100887), this protein is Uroporphyrinogen decarboxylase.